Here is a 232-residue protein sequence, read N- to C-terminus: Ubiquinone biosynthesis O-methyltransferase (232 aa).

S-adenosyl-L-methionine contacts are provided by arginine 36, glycine 55, aspartate 76, and methionine 120.

This sequence belongs to the methyltransferase superfamily. UbiG/COQ3 family.

It carries out the reaction a 3-demethylubiquinol + S-adenosyl-L-methionine = a ubiquinol + S-adenosyl-L-homocysteine + H(+). It catalyses the reaction a 3-(all-trans-polyprenyl)benzene-1,2-diol + S-adenosyl-L-methionine = a 2-methoxy-6-(all-trans-polyprenyl)phenol + S-adenosyl-L-homocysteine + H(+). The protein operates within cofactor biosynthesis; ubiquinone biosynthesis. O-methyltransferase that catalyzes the 2 O-methylation steps in the ubiquinone biosynthetic pathway. This Paraburkholderia xenovorans (strain LB400) protein is Ubiquinone biosynthesis O-methyltransferase.